We begin with the raw amino-acid sequence, 296 residues long: MSGLPLISRRRLLTAMALSPLLWQMNTAHAAAIDPNRIVALEWLPVELLLALGIVPYGVADTINYRLWVSEPPLPDSVIDVGLRTEPNLELLTEMKPSFMVWSAGYGPSPEMLARIAPGRGFNFSDGKQPLAMARKSLTEMADLLNLQSAAETHLAQYEDFIRSMKPRFVKRGARPLLLTTLIDPRHMLVFGPNSLFQEILDEYGIPNAWQGETNFWGSTAVSIDRLAAYKDVDVLCFDHDNSKDMDALMATPLWQAMPFVRAGRFQRVPAVWFYGATLSAMHFVRVLDNAIGGKA.

The segment at residues 1-30 is a signal peptide (tat-type signal); that stretch reads MSGLPLISRRRLLTAMALSPLLWQMNTAHA. The Fe/B12 periplasmic-binding domain maps to 37–296; that stretch reads RIVALEWLPV…VLDNAIGGKA (260 aa). Positions 68, 84, 103, 106, 124, 217, 273, 274, and 275 each coordinate Fe(III)-coprogen.

It belongs to the bacterial solute-binding protein 8 family. The complex is composed of two ATP-binding proteins (FhuC), a transmembrane protein (FhuB) and a solute-binding protein (FhuD). FhuD interacts with FhuB. Substrate-loaded FhuD binds FhuB more strongly than FhuD alone. In terms of processing, exported by the Tat system. The position of the signal peptide cleavage has been experimentally proven. Can also be exported by the Sec system.

It is found in the periplasm. Functionally, part of the ABC transporter complex FhuCDB involved in iron(3+)-hydroxamate import. Binds the iron(3+)-hydroxamate complex and transfers it to the membrane-bound permease. Required for the transport of all iron(3+)-hydroxamate siderophores such as ferrichrome, gallichrome, desferrioxamine, coprogen, aerobactin, shizokinen, rhodotorulic acid and the antibiotic albomycin. This Escherichia coli (strain K12) protein is Iron(3+)-hydroxamate-binding protein FhuD (fhuD).